The sequence spans 249 residues: Tabinhibitin 4 (249 aa).

The first 23 residues, 1–23 (MTLNVYFVLLSPYSLQSVPLPLT), serve as a signal peptide directing secretion. The Cell attachment site signature appears at 31 to 33 (RGD). The region spanning 64-207 (LQKTNWLRGV…LKRALFTCNF (144 aa)) is the SCP domain. The Cell attachment site motif lies at 220 to 222 (RGD).

This sequence belongs to the CRISP family. Expressed in salivary glands.

Its subcellular location is the secreted. Functionally, inhibits platelet aggregation induced by all agonists tested (ADP, arachidonic acid, the thromboxane A2 analog U46619, thrombin, and snake venom snaclecs (TMVA that activates platelet through GPIB, and stejnulxin that specifically acts through GPVI (GP6))). May act by competing with fibrinogen for binding to glycoprotein IIb/IIIa (ITGA2B/ITGB3). This is Tabinhibitin 4 from Tabanus yao (Horsefly).